Here is a 671-residue protein sequence, read N- to C-terminus: MTDKYNDWVKNKKHNNYNMAEDPLYYIKSNWVIERQLSKGSFGQVYKAHKKLDPNFVCAIKVIQYCKFTMKEVDYLKKLNDPKFVKYYSLEFNNSKTYAYIIMEFIEGESMKSIIENKKFSDIEIKEIIKELLKALVYLNDKGIMHRDLKPENIMFQNQNQNQNQNNKINLKLIDFGLSKAINENIINKTVKLQTISSVGTTLYMAPEILLNNKGSNSSLDIWSLGCIIVEMKWGLNQLCLQRPNNIPVFPVNSLFTEILNLCFQTEPSKRIKSHQLIKHPFFNDENEQFYNDNKEYFDFLKENERDSYIEIHNTESIGSNSTCSINEIRFENLYLIQSTYENQYPIKTITLHEKYTGISKLSHLNSKFKIIYLFLILLFLMTILVNLNRHVQTKFSIIQRDNIFLSITPESNPIKKPSPTQSSDYNQYSEGSQSSYESSSSSESSSESSSSESSSSESSSSSESQSSEINYSSNSNDLQPTDSSTTDPPVTDPPITDPPITDPPVTDPPITEPPVTETPKPTINPFFNTPVFICSQKIDQCLTVLNSQDLEFIDKKGRDQSMVLEYDGNAEQTFSIREKGGMYICLSGEHYHFSEKLKGRLNANKDGRDCTFNLITQFNIDKQANLYSFRSPNDQYIQSDETTRFISTKPGGLGSQSQFFIYFSHSLGPN.

Residues 31–283 (WVIERQLSKG…SHQLIKHPFF (253 aa)) form the Protein kinase domain. ATP is bound by residues 37–45 (LSKGSFGQV) and Lys-61. Asp-148 acts as the Proton acceptor in catalysis. A helical transmembrane segment spans residues 369–389 (FKIIYLFLILLFLMTILVNLN). The disordered stretch occupies residues 410 to 523 (PESNPIKKPS…PPVTETPKPT (114 aa)). The segment covering 427–490 (NQYSEGSQSS…PTDSSTTDPP (64 aa)) has biased composition (low complexity). The segment covering 491–513 (VTDPPITDPPITDPPVTDPPITE) has biased composition (pro residues).

This sequence belongs to the protein kinase superfamily. STE Ser/Thr protein kinase family. The cofactor is Mg(2+).

The protein resides in the membrane. The enzyme catalyses L-seryl-[protein] + ATP = O-phospho-L-seryl-[protein] + ADP + H(+). It carries out the reaction L-threonyl-[protein] + ATP = O-phospho-L-threonyl-[protein] + ADP + H(+). In Dictyostelium discoideum (Social amoeba), this protein is Probable serine/threonine-protein kinase DDB_G0286627.